Here is a 90-residue protein sequence, read N- to C-terminus: Interferon alpha-inducible protein 27-like protein 2A (90 aa).

The first 24 residues, 1–24 (MLGTLFGSAIGGALAVAGAPVALA), serve as a signal peptide directing secretion. Transmembrane regions (helical) follow at residues 28–48 (FTGT…AAAI) and 67–89 (GVLG…VGAL).

The protein belongs to the IFI6/IFI27 family. Homodimer. Interacts with SKP2. Interacts with NR4A1. May interact with BCL2.

Its subcellular location is the nucleus inner membrane. Its function is as follows. May be involved in the interferon-induced negative regulation of the transcriptional activity of NR4A1, NR4A2 and NR4A3 through the enhancement of XPO1-mediated nuclear export of these nuclear receptors. Through the regulation of NR4A1 transcriptional activity, may play a role in the vascular response to injury. The polypeptide is Interferon alpha-inducible protein 27-like protein 2A (Mus musculus (Mouse)).